The sequence spans 118 residues: Ribonuclease P protein component (118 aa).

This sequence belongs to the RnpA family. In terms of assembly, consists of a catalytic RNA component (M1 or rnpB) and a protein subunit.

It carries out the reaction Endonucleolytic cleavage of RNA, removing 5'-extranucleotides from tRNA precursor.. Functionally, RNaseP catalyzes the removal of the 5'-leader sequence from pre-tRNA to produce the mature 5'-terminus. It can also cleave other RNA substrates such as 4.5S RNA. The protein component plays an auxiliary but essential role in vivo by binding to the 5'-leader sequence and broadening the substrate specificity of the ribozyme. The chain is Ribonuclease P protein component from Shewanella amazonensis (strain ATCC BAA-1098 / SB2B).